A 448-amino-acid polypeptide reads, in one-letter code: Histidinol dehydrogenase (448 aa).

NAD(+) is bound by residues Tyr-136, Gln-197, and Asn-220. Positions 243, 265, and 268 each coordinate substrate. Residues Gln-265 and His-268 each coordinate Zn(2+). Catalysis depends on proton acceptor residues Glu-333 and His-334. Substrate contacts are provided by His-334, Asp-367, Glu-421, and His-426. Residue Asp-367 participates in Zn(2+) binding. His-426 lines the Zn(2+) pocket.

It belongs to the histidinol dehydrogenase family. Zn(2+) serves as cofactor.

It catalyses the reaction L-histidinol + 2 NAD(+) + H2O = L-histidine + 2 NADH + 3 H(+). It functions in the pathway amino-acid biosynthesis; L-histidine biosynthesis; L-histidine from 5-phospho-alpha-D-ribose 1-diphosphate: step 9/9. In terms of biological role, catalyzes the sequential NAD-dependent oxidations of L-histidinol to L-histidinaldehyde and then to L-histidine. This chain is Histidinol dehydrogenase, found in Pseudomonas syringae pv. tomato (strain ATCC BAA-871 / DC3000).